Consider the following 385-residue polypeptide: Succinate--CoA ligase [ADP-forming] subunit beta (385 aa).

The ATP-grasp domain maps to 9 to 243; the sequence is KEILSAYGIP…YSQLDTLEIN (235 aa). Residues K45, 52–54, E98, V101, and E106 contribute to the ATP site; that span reads GRG. Mg(2+) is bound by residues N198 and D212. Residues N263 and 320 to 322 each bind substrate; that span reads GIM.

This sequence belongs to the succinate/malate CoA ligase beta subunit family. Heterotetramer of two alpha and two beta subunits. The cofactor is Mg(2+).

The catalysed reaction is succinate + ATP + CoA = succinyl-CoA + ADP + phosphate. The enzyme catalyses GTP + succinate + CoA = succinyl-CoA + GDP + phosphate. Its pathway is carbohydrate metabolism; tricarboxylic acid cycle; succinate from succinyl-CoA (ligase route): step 1/1. Functionally, succinyl-CoA synthetase functions in the citric acid cycle (TCA), coupling the hydrolysis of succinyl-CoA to the synthesis of either ATP or GTP and thus represents the only step of substrate-level phosphorylation in the TCA. The beta subunit provides nucleotide specificity of the enzyme and binds the substrate succinate, while the binding sites for coenzyme A and phosphate are found in the alpha subunit. This chain is Succinate--CoA ligase [ADP-forming] subunit beta, found in Geobacter sulfurreducens (strain ATCC 51573 / DSM 12127 / PCA).